Here is a 291-residue protein sequence, read N- to C-terminus: MAITAALVKELRDSTGAGMMDAKKALTETDGDMEAAVDWLRTKGLAKAAKKSGRTAAEGLVAVVVEGGKGVAVEVNSETDFVAKNSDFQEMVGKIAAAALAADDVDALLAADLGGKSVADTLTAKIATIGENMSVRRLAKLEGETVVTYVHNAATTGMGKIGVLVAMKGGDEALGKQVAMHIAAVNPAALSEAEMDPVVVEKEKQVQMDIARESGKPEAVIEKMIEGRMKKFVAESTLLSQQFVVNPDLTVGAAAAEAGAEITGFVRLEVGEGIVVEKEDFAAEVAKAAQG.

Residues 79 to 82 are involved in Mg(2+) ion dislocation from EF-Tu; sequence TDFV.

This sequence belongs to the EF-Ts family.

The protein localises to the cytoplasm. Functionally, associates with the EF-Tu.GDP complex and induces the exchange of GDP to GTP. It remains bound to the aminoacyl-tRNA.EF-Tu.GTP complex up to the GTP hydrolysis stage on the ribosome. This is Elongation factor Ts from Ruegeria pomeroyi (strain ATCC 700808 / DSM 15171 / DSS-3) (Silicibacter pomeroyi).